Reading from the N-terminus, the 491-residue chain is Protein translocase subunit SecY (491 aa).

The Cytoplasmic portion of the chain corresponds to 1–20 (MGWKEAAAPVLTRMPAVERP). A helical membrane pass occupies residues 21-47 (EGHVPFRRKMYWTGGVLVLYFFLTNVP). Over 48-58 (LWGIQTAGNDF) the chain is Extracellular. Residues 59-66 (FGQFRSLL) constitute an intramembrane region (helical). The discontinuously helical transmembrane segment at 59–87 (FGQFRSLLAGGQGTVLQLGIGPIVTASIV) threads the bilayer. The stretch at 67–78 (AGGQGTVLQLGI) is an intramembrane region. Residues 79-87 (GPIVTASIV) constitute an intramembrane region (helical). The Cytoplasmic portion of the chain corresponds to 88 to 109 (LQLLGGANLLGLDTDNDPRDQA). Residues 110–134 (IYQGLQKFLVGVMVVLTGAPMVFLG) traverse the membrane as a helical segment. The Extracellular portion of the chain corresponds to 135 to 152 (NFLQPSQQLAQSMPGGAF). Residues 153–177 (GVEVLIFAQIAAGGILLLFMDEVIS) traverse the membrane as a helical segment. Residues 178-183 (KWGVGS) are Cytoplasmic-facing. The chain crosses the membrane as a helical span at residues 184–202 (GIGLFIVAGVSQSLVGGLV). Residues 203 to 244 (FWEGGVGSQGLLPTWFDIIVGNVSNMPPLLSGSGIEFLLMQA) lie on the Extracellular side of the membrane. A helical membrane pass occupies residues 245-266 (GILGLLTTLFIYVVVVYAESVR). Over 267-291 (VEIPLSHARVKGARGRFPVKLIYAS) the chain is Cytoplasmic. A helical transmembrane segment spans residues 292 to 313 (VLPMILVRALQANIQFLGQILN). Residues 314 to 365 (STLASMPTWLGVYGGNGQVTGGLFYYLAPIYSPNAWMWWTSGATAARWQVLI) lie on the Extracellular side of the membrane. The helical transmembrane segment at 366-385 (RIAIDLSFMIIGGAIFAIFW) threads the bilayer. Topologically, residues 386–428 (VETADMGPDATARQIQNSGMQIPGFRKNQGVIEKVMERYIPQV) are cytoplasmic. A helical transmembrane segment spans residues 429-447 (TVIGGALVGLLAVMANMLG). Residues 448–452 (TIGNV) are Extracellular-facing. A helical transmembrane segment spans residues 453–467 (SGTGLLLTISITYKL). The Cytoplasmic segment spans residues 468 to 491 (YEEIAEEQMMEMHPMMREMFGGGD).

Belongs to the SecY/SEC61-alpha family. As to quaternary structure, component of the Sec protein translocase complex. Heterotrimer consisting of alpha (SecY), beta (SecG) and gamma (SecE) subunits. The heterotrimers can form oligomers, although 1 heterotrimer is thought to be able to translocate proteins. Interacts with the ribosome. May interact with SecDF, and other proteins may be involved.

The protein resides in the cell membrane. In terms of biological role, the central subunit of the protein translocation channel SecYEG. Consists of two halves formed by TMs 1-5 and 6-10. These two domains form a lateral gate at the front which open onto the bilayer between TMs 2 and 7, and are clamped together by SecE at the back. The channel is closed by both a pore ring composed of hydrophobic SecY resides and a short helix (helix 2A) on the extracellular side of the membrane which forms a plug. The plug probably moves laterally to allow the channel to open. The ring and the pore may move independently. In Halobacterium salinarum (strain ATCC 700922 / JCM 11081 / NRC-1) (Halobacterium halobium), this protein is Protein translocase subunit SecY.